The following is a 259-amino-acid chain: Complement factor D (259 aa).

The N-terminal stretch at 1-21 (MADRSLHLVVLILLGTALCAA) is a signal peptide. A propeptide spans 22–26 (QPRGR) (activation peptide). A Peptidase S1 domain is found at 27-254 (ILRGQEAPSH…YVAWIDGVMA (228 aa)). A disulfide bridge connects residues Cys-52 and Cys-68. Active-site charge relay system residues include His-67 and Asp-115. 3 disulfide bridges follow: Cys-149–Cys-215, Cys-180–Cys-196, and Cys-205–Cys-230. The active-site Charge relay system is the Ser-209. The interval 224-228 (TSGSR) is self-inhibitor loop.

The protein belongs to the peptidase S1 family. In terms of processing, CFD is activated by the removal of 5 residues at the N-terminus, named activation peptide, by the MASP-3 isoform of MASP1.

It localises to the secreted. It carries out the reaction Selective cleavage of Arg-|-Lys bond in complement factor B when in complex with complement subcomponent C3b or with cobra venom factor.. Circulates in plasma in a mature but self-inhibited form. Activated by factor B (CFB), which displaces the self-inhibition loop. Associates with CFB complexed with complement C3b. Serine protease that initiates the alternative pathway of the complement system, a cascade of proteins that leads to phagocytosis and breakdown of pathogens and signaling that strengthens the adaptive immune system. In contrast to other complement pathways (classical, lectin and GZMK) that are directly activated by pathogens or antigen-antibody complexes, the alternative complement pathway is initiated by the spontaneous hydrolysis of complement C3. The alternative complement pathway acts as an amplification loop that enhances complement activation by mediating the formation of C3 and C5 convertases. Activated CFD cleaves factor B (CFB) when the latter is complexed with complement C3b, activating the C3 convertase of the alternative pathway. In Bos taurus (Bovine), this protein is Complement factor D (CFD).